The chain runs to 380 residues: Alcohol dehydrogenase 2 (380 aa).

Residues Cys48, Thr50, His70, Cys100, Cys103, Cys106, Cys114, and Cys178 each coordinate Zn(2+). Residues Thr50 and His70 each contribute to the an alcohol site. An NAD(+)-binding site is contributed by Thr50. NAD(+) contacts are provided by residues 203–208, Asp227, Arg232, Thr273, Val296, 296–298, Phe323, and Arg373; these read GLGAVG and VGV.

The protein belongs to the zinc-containing alcohol dehydrogenase family. Homodimer. Homotetramer. Requires Zn(2+) as cofactor.

The protein resides in the cytoplasm. It carries out the reaction a primary alcohol + NAD(+) = an aldehyde + NADH + H(+). The enzyme catalyses a secondary alcohol + NAD(+) = a ketone + NADH + H(+). This is Alcohol dehydrogenase 2 (ADH2) from Solanum tuberosum (Potato).